The chain runs to 134 residues: Ribosome-binding factor A (134 aa).

It belongs to the RbfA family. As to quaternary structure, monomer. Binds 30S ribosomal subunits, but not 50S ribosomal subunits or 70S ribosomes.

It localises to the cytoplasm. Its function is as follows. One of several proteins that assist in the late maturation steps of the functional core of the 30S ribosomal subunit. Associates with free 30S ribosomal subunits (but not with 30S subunits that are part of 70S ribosomes or polysomes). Required for efficient processing of 16S rRNA. May interact with the 5'-terminal helix region of 16S rRNA. The protein is Ribosome-binding factor A of Bartonella bacilliformis (strain ATCC 35685 / KC583 / Herrer 020/F12,63).